Consider the following 291-residue polypeptide: UPF0173 metal-dependent hydrolase Rmet_5695 (291 aa).

This sequence belongs to the UPF0173 family.

In Cupriavidus metallidurans (strain ATCC 43123 / DSM 2839 / NBRC 102507 / CH34) (Ralstonia metallidurans), this protein is UPF0173 metal-dependent hydrolase Rmet_5695.